A 205-amino-acid chain; its full sequence is Holliday junction branch migration complex subunit RuvA (205 aa).

The interval 1–64 is domain I; sequence MIGKLKGLID…EDQIKLFGFR (64 aa). The domain II stretch occupies residues 65 to 143; sequence SDLEREWFRL…AFASVDPAVV (79 aa). Positions 144–153 are flexible linker; that stretch reads ALSGALDERS. Positions 153-205 are domain III; sequence SAPRPVTDAISALVNLGYGQPQAAAAIASASRSAGEGAETAQLIKLGLKELSK.

It belongs to the RuvA family. In terms of assembly, homotetramer. Forms an RuvA(8)-RuvB(12)-Holliday junction (HJ) complex. HJ DNA is sandwiched between 2 RuvA tetramers; dsDNA enters through RuvA and exits via RuvB. An RuvB hexamer assembles on each DNA strand where it exits the tetramer. Each RuvB hexamer is contacted by two RuvA subunits (via domain III) on 2 adjacent RuvB subunits; this complex drives branch migration. In the full resolvosome a probable DNA-RuvA(4)-RuvB(12)-RuvC(2) complex forms which resolves the HJ.

The protein localises to the cytoplasm. In terms of biological role, the RuvA-RuvB-RuvC complex processes Holliday junction (HJ) DNA during genetic recombination and DNA repair, while the RuvA-RuvB complex plays an important role in the rescue of blocked DNA replication forks via replication fork reversal (RFR). RuvA specifically binds to HJ cruciform DNA, conferring on it an open structure. The RuvB hexamer acts as an ATP-dependent pump, pulling dsDNA into and through the RuvAB complex. HJ branch migration allows RuvC to scan DNA until it finds its consensus sequence, where it cleaves and resolves the cruciform DNA. This Rhodopseudomonas palustris (strain BisB18) protein is Holliday junction branch migration complex subunit RuvA.